The primary structure comprises 471 residues: MNPNQKLFALSGVAIALSVLNLLIGISNVGLNVSLHLKGAGTKQEENLTCTTITQNNTTVVENTYVNNTTIITKEPEFRAPSYLLLNKSLCNVEGWVVVAKDNAIRFGESEQIIVTREPYVSCDPSGCKMYALHQGTTIRNKHSNGTIHDRTAFRGLISTHLGTPPTVSNSDFICVGWSSTSCHDGIGRMTICVQGNNDNATATVYYNRRLTTTIKTWARNILRTQESECVCHNGTCAVVMTDGSASSQAYTKVMYFHKGLVIKEEPLKGSAKHIEECSCYGHNQKITCVCRDNWQGANRPIIEIDMTTLEHTSRYVCTGVLTDTSRPGDKPSGDCSNPITGSPGAPGVKGFGFLNGDNTWLGRTISPRSRSGFEMLKIPNAGTDPNSKIVERQEIVDNNNWSGYSGSFIDYWDDGNECYNPCFYVELIRGRPEEAKYVWWTSNSLIALCGSPFPVGSGSFPDGAQIQYFS.

The Intravirion segment spans residues 1–6; it reads MNPNQK. The helical transmembrane segment at 7 to 27 threads the bilayer; sequence LFALSGVAIALSVLNLLIGIS. The involved in apical transport and lipid raft association stretch occupies residues 11 to 33; it reads SGVAIALSVLNLLIGISNVGLNV. Over 28–471 the chain is Virion surface; the sequence is NVGLNVSLHL…PDGAQIQYFS (444 aa). Residues asparagine 32, asparagine 47, asparagine 56, asparagine 57, asparagine 67, asparagine 68, and asparagine 87 are each glycosylated (N-linked (GlcNAc...) asparagine; by host). Residues 36–87 are hypervariable stalk region; it reads HLKGAGTKQEENLTCTTITQNNTTVVENTYVNNTTIITKEPEFRAPSYLLLN. The head of neuraminidase stretch occupies residues 90–471; it reads LCNVEGWVVV…PDGAQIQYFS (382 aa). 8 disulfides stabilise this stretch: cysteine 91/cysteine 419, cysteine 123/cysteine 128, cysteine 183/cysteine 230, cysteine 232/cysteine 237, cysteine 278/cysteine 291, cysteine 280/cysteine 289, cysteine 318/cysteine 336, and cysteine 423/cysteine 450. Residue arginine 117 participates in substrate binding. A glycan (N-linked (GlcNAc...) asparagine; by host) is linked at asparagine 145. Aspartate 150 functions as the Proton donor/acceptor in the catalytic mechanism. Arginine 151 contacts substrate. N-linked (GlcNAc...) asparagine; by host glycosylation is found at asparagine 200 and asparagine 234. 276–277 provides a ligand contact to substrate; that stretch reads EE. A substrate-binding site is contributed by arginine 292. Positions 293, 297, and 324 each coordinate Ca(2+). Arginine 371 contacts substrate. N-linked (GlcNAc...) asparagine; by host glycosylation is present at asparagine 401. The active-site Nucleophile is the tyrosine 405.

It belongs to the glycosyl hydrolase 34 family. In terms of assembly, homotetramer. Requires Ca(2+) as cofactor. N-glycosylated.

The protein localises to the virion membrane. The protein resides in the host apical cell membrane. It carries out the reaction Hydrolysis of alpha-(2-&gt;3)-, alpha-(2-&gt;6)-, alpha-(2-&gt;8)- glycosidic linkages of terminal sialic acid residues in oligosaccharides, glycoproteins, glycolipids, colominic acid and synthetic substrates.. Inhibited by the neuraminidase inhibitors zanamivir (Relenza) and oseltamivir (Tamiflu). These drugs interfere with the release of progeny virus from infected cells and are effective against all influenza strains. Resistance to neuraminidase inhibitors is quite rare. Catalyzes the removal of terminal sialic acid residues from viral and cellular glycoconjugates. Cleaves off the terminal sialic acids on the glycosylated HA during virus budding to facilitate virus release. Additionally helps virus spread through the circulation by further removing sialic acids from the cell surface. These cleavages prevent self-aggregation and ensure the efficient spread of the progeny virus from cell to cell. Otherwise, infection would be limited to one round of replication. Described as a receptor-destroying enzyme because it cleaves a terminal sialic acid from the cellular receptors. May facilitate viral invasion of the upper airways by cleaving the sialic acid moieties on the mucin of the airway epithelial cells. Likely to plays a role in the budding process through its association with lipid rafts during intracellular transport. May additionally display a raft-association independent effect on budding. Plays a role in the determination of host range restriction on replication and virulence. Sialidase activity in late endosome/lysosome traffic seems to enhance virus replication. The protein is Neuraminidase of Aves (Horse).